The chain runs to 320 residues: Nuclease (320 aa).

The active-site Proton acceptor is the H155. Mg(2+) is bound at residue N187. N204 carries N-linked (GlcNAc...) asparagine glycosylation. The cysteines at positions 312 and 317 are disulfide-linked.

It belongs to the DNA/RNA non-specific endonuclease family. In terms of assembly, homodimer; as a result of non-covalent interactions and not through the disulfide linkages between the two monomers. The cofactor is Mg(2+). Mn(2+) serves as cofactor. In terms of processing, glycosylated.

Its subcellular location is the secreted. This enzyme has both RNase and DNase activity. This chain is Nuclease, found in Syncephalastrum racemosum (Filamentous fungus).